Reading from the N-terminus, the 311-residue chain is tRNA pseudouridine synthase B (311 aa).

A substrate-binding site is contributed by H43. Catalysis depends on D48, which acts as the Nucleophile. Y76, Y179, and L200 together coordinate substrate.

The protein belongs to the pseudouridine synthase TruB family. Type 1 subfamily.

The enzyme catalyses uridine(55) in tRNA = pseudouridine(55) in tRNA. Functionally, responsible for synthesis of pseudouridine from uracil-55 in the psi GC loop of transfer RNAs. The polypeptide is tRNA pseudouridine synthase B (Sodalis glossinidius (strain morsitans)).